We begin with the raw amino-acid sequence, 154 residues long: Transcription antitermination protein NusB (154 aa).

It belongs to the NusB family.

In terms of biological role, involved in transcription antitermination. Required for transcription of ribosomal RNA (rRNA) genes. Binds specifically to the boxA antiterminator sequence of the ribosomal RNA (rrn) operons. This is Transcription antitermination protein NusB from Desulfosudis oleivorans (strain DSM 6200 / JCM 39069 / Hxd3) (Desulfococcus oleovorans).